The chain runs to 587 residues: Thioredoxin domain-containing protein 3 (587 aa).

In terms of domain architecture, Thioredoxin spans 2–119; it reads ASKKREVQLQ…VIALIDEEKK (118 aa). Cysteine 39 and cysteine 42 are joined by a disulfide. 3 NDK regions span residues 157–255, 313–453, and 454–587; these read MAVI…PLEE, VQRT…STLA, and LIKP…NFEN.

The protein in the C-terminal section; belongs to the NDK family. In terms of assembly, monomer. In terms of tissue distribution, testis-specific.

It is found in the cytoplasm. Its function is as follows. Probably required during the final stages of sperm tail maturation in the testis and/or epididymis, where extensive disulfide bonding of fibrous sheath (FS) proteins occurs. In vitro, it has neither nucleoside diphosphate kinase (NDPK) activity nor reducing activity on disulfide bonds. Exhibits a 3'-5' exonuclease activity with a preference for single-stranded DNA, suggesting roles in DNA proofreading and repair. This is Thioredoxin domain-containing protein 3 (Nme8) from Rattus norvegicus (Rat).